Consider the following 122-residue polypeptide: Large ribosomal subunit protein uL18 (122 aa).

The protein belongs to the universal ribosomal protein uL18 family. Part of the 50S ribosomal subunit; part of the 5S rRNA/L5/L18/L25 subcomplex. Contacts the 5S and 23S rRNAs.

Its function is as follows. This is one of the proteins that bind and probably mediate the attachment of the 5S RNA into the large ribosomal subunit, where it forms part of the central protuberance. This Geobacter sp. (strain M21) protein is Large ribosomal subunit protein uL18.